A 549-amino-acid polypeptide reads, in one-letter code: Oxygen-dependent choline dehydrogenase (549 aa).

Residue 4–33 (DFVIIGSGSAGSALAYRLSEDGANSVVVLE) coordinates FAD. Histidine 465 functions as the Proton acceptor in the catalytic mechanism.

Belongs to the GMC oxidoreductase family. FAD is required as a cofactor.

It carries out the reaction choline + A = betaine aldehyde + AH2. It catalyses the reaction betaine aldehyde + NAD(+) + H2O = glycine betaine + NADH + 2 H(+). It participates in amine and polyamine biosynthesis; betaine biosynthesis via choline pathway; betaine aldehyde from choline (cytochrome c reductase route): step 1/1. Its function is as follows. Involved in the biosynthesis of the osmoprotectant glycine betaine. Catalyzes the oxidation of choline to betaine aldehyde and betaine aldehyde to glycine betaine at the same rate. The sequence is that of Oxygen-dependent choline dehydrogenase from Sinorhizobium medicae (strain WSM419) (Ensifer medicae).